The chain runs to 298 residues: MLYQQISQNKQRTVVLLVVFFALLALIGASAGYLLLDNYAMGLVLALVIGMIYATSMIFQSTSLVMSMNNAREVTEKEAPGFFHIVEDMAMVAQIPMPRVFIIEDPSLNAFATGSSPQNAAVAATTGLLEVMNREELEGVIGHEISHIRNYDIRISTIAVALASAVTVISSIGGRMLWYGGGSRRQRDDGDDDVLRIITLLLSLLSLLLAPLVASLIQLAISRQREYLADASSVELTRNPQGMIKALEKLQLSQPMKHPVDDASAALYINEPRKKRSFSSLFSTHPPIEERIERLKNM.

A run of 2 helical transmembrane segments spans residues valine 14 to leucine 34 and tyrosine 39 to phenylalanine 59. Histidine 143 provides a ligand contact to Zn(2+). Residue glutamate 144 is part of the active site. Zn(2+) is bound at residue histidine 147. A run of 2 helical transmembrane segments spans residues isoleucine 158–tryptophan 178 and isoleucine 197–isoleucine 217. Glutamate 226 contributes to the Zn(2+) binding site.

This sequence belongs to the peptidase M48B family. It depends on Zn(2+) as a cofactor.

Its subcellular location is the cell membrane. In Streptococcus pyogenes serotype M49 (strain NZ131), this protein is Protease HtpX homolog.